We begin with the raw amino-acid sequence, 270 residues long: Bis(5'-nucleosyl)-tetraphosphatase, symmetrical (270 aa).

It belongs to the Ap4A hydrolase family.

It carries out the reaction P(1),P(4)-bis(5'-adenosyl) tetraphosphate + H2O = 2 ADP + 2 H(+). In terms of biological role, hydrolyzes diadenosine 5',5'''-P1,P4-tetraphosphate to yield ADP. The protein is Bis(5'-nucleosyl)-tetraphosphatase, symmetrical of Actinobacillus pleuropneumoniae serotype 5b (strain L20).